The primary structure comprises 425 residues: Enolase (425 aa).

Q163 contributes to the (2R)-2-phosphoglycerate binding site. E205 functions as the Proton donor in the catalytic mechanism. Mg(2+) is bound by residues D242, E285, and D312. Residues K337, R366, S367, and K388 each contribute to the (2R)-2-phosphoglycerate site. K337 acts as the Proton acceptor in catalysis.

The protein belongs to the enolase family. Mg(2+) serves as cofactor.

The protein localises to the cytoplasm. The protein resides in the secreted. Its subcellular location is the cell surface. It carries out the reaction (2R)-2-phosphoglycerate = phosphoenolpyruvate + H2O. Its pathway is carbohydrate degradation; glycolysis; pyruvate from D-glyceraldehyde 3-phosphate: step 4/5. Catalyzes the reversible conversion of 2-phosphoglycerate (2-PG) into phosphoenolpyruvate (PEP). It is essential for the degradation of carbohydrates via glycolysis. The protein is Enolase of Granulibacter bethesdensis (strain ATCC BAA-1260 / CGDNIH1).